Here is a 666-residue protein sequence, read N- to C-terminus: Asperfuranone cluster transcription factor afoA (666 aa).

Positions 16-43 (CEECRRRKARCDRVRPKCGFCTENELQC) form a DNA-binding region, zn(2)-C6 fungal-type. 2 disordered regions span residues 184–206 (LSFDLLNETPPPPSTTTTTSTTR) and 347–373 (AGSDRQLSPPSSSPPSSLTLSPSGENA). A compositionally biased stretch (low complexity) spans 353 to 369 (LSPPSSSPPSSLTLSPS).

It localises to the nucleus. In terms of biological role, transcription factor that regulates the expression of the gene cluster that mediates the biosynthesis of asperfuranone, a probable antitumor agent. This is Asperfuranone cluster transcription factor afoA from Emericella nidulans (strain FGSC A4 / ATCC 38163 / CBS 112.46 / NRRL 194 / M139) (Aspergillus nidulans).